A 193-amino-acid polypeptide reads, in one-letter code: dCTP deaminase (193 aa).

DCTP-binding positions include 110 to 115, D128, 136 to 138, Y171, K178, and Q182; these read RSSLAR and VLE. The active-site Proton donor/acceptor is the E138.

Belongs to the dCTP deaminase family. In terms of assembly, homotrimer.

It carries out the reaction dCTP + H2O + H(+) = dUTP + NH4(+). It participates in pyrimidine metabolism; dUMP biosynthesis; dUMP from dCTP (dUTP route): step 1/2. Catalyzes the deamination of dCTP to dUTP. In Aeromonas hydrophila subsp. hydrophila (strain ATCC 7966 / DSM 30187 / BCRC 13018 / CCUG 14551 / JCM 1027 / KCTC 2358 / NCIMB 9240 / NCTC 8049), this protein is dCTP deaminase.